Consider the following 428-residue polypeptide: C4-dicarboxylate transport protein (428 aa).

8 helical membrane-spanning segments follow: residues 8 to 28, 44 to 64, 76 to 96, 142 to 162, 184 to 204, 222 to 242, 326 to 346, and 352 to 372; these read SLYF…HFYP, LIKM…IAGM, VALL…LIIV, IGAF…LFGF, VIFG…FGAM, LIIC…GSIA, IFHQ…AAGV, and IVLA…LALI.

Belongs to the dicarboxylate/amino acid:cation symporter (DAACS) (TC 2.A.23) family.

The protein localises to the cell inner membrane. In terms of biological role, responsible for the transport of dicarboxylates such as succinate, fumarate, and malate from the periplasm across the membrane. This Enterobacter sp. (strain 638) protein is C4-dicarboxylate transport protein.